The following is a 383-amino-acid chain: G-protein coupled receptor E1 (383 aa).

9 consecutive transmembrane segments (helical) span residues 13 to 35, 78 to 98, 109 to 129, 160 to 180, 190 to 210, 242 to 262, 279 to 299, 323 to 343, and 351 to 371; these read SSLA…TTIA, LYLL…IIVI, MLLL…PFWM, VFCI…AVTA, IVTC…EFFF, VIML…YVII, LIFV…IVLL, LITK…YAFV, and LYHF…PFLS. Residues cysteine 145 and cysteine 222 are joined by a disulfide bond.

It belongs to the G-protein coupled receptor 1 family.

The protein localises to the host membrane. This chain is G-protein coupled receptor E1 (E1), found in Equine herpesvirus 2 (strain 86/87) (EHV-2).